We begin with the raw amino-acid sequence, 472 residues long: Glutamate--tRNA ligase (472 aa).

The 'HIGH' region motif lies at 9 to 19; sequence PSPTGYLHVGG. C98, C100, C125, and H127 together coordinate Zn(2+). A 'KMSKS' region motif is present at residues 237–241; that stretch reads KLSKR. K240 contacts ATP.

The protein belongs to the class-I aminoacyl-tRNA synthetase family. Glutamate--tRNA ligase type 1 subfamily. In terms of assembly, monomer. The cofactor is Zn(2+).

It localises to the cytoplasm. It carries out the reaction tRNA(Glu) + L-glutamate + ATP = L-glutamyl-tRNA(Glu) + AMP + diphosphate. Its function is as follows. Catalyzes the attachment of glutamate to tRNA(Glu) in a two-step reaction: glutamate is first activated by ATP to form Glu-AMP and then transferred to the acceptor end of tRNA(Glu). The protein is Glutamate--tRNA ligase of Klebsiella pneumoniae subsp. pneumoniae (strain ATCC 700721 / MGH 78578).